Here is a 169-residue protein sequence, read N- to C-terminus: Protein HIGH ARSENIC CONTENT 1, mitochondrial (169 aa).

Residues 1 to 59 constitute a mitochondrion transit peptide; sequence MYTYSLLNLSHCRRQTRKKRKTDHTEGFLMEETKPKTVEDVETVDVYTAKGFLSTGHRY. The Rhodanese domain occupies 60–153; sequence LDVRTNEEFA…WVDAGFAGDK (94 aa). Cys113 (cysteine persulfide intermediate) is an active-site residue.

Expressed in root hairs, epidermal cells at the surface of the root and in the pericycle within the stele.

Its subcellular location is the mitochondrion. It carries out the reaction [glutaredoxin]-dithiol + arsenate + glutathione + H(+) = glutathionyl-S-S-[glutaredoxin] + arsenite + H2O. With respect to regulation, inhibited by trobenzenesulphonic acid (TNBS). Functionally, arsenate reductase critical for arsenic tolerance. Reduces arsenate to arsenite in the root, facilitating efflux of arsenic back into the soil to limit both its accumulation in the root and transport to the shoot. Essential for arsenite efflux from the root, but not necessary for arsenate uptake. The chain is Protein HIGH ARSENIC CONTENT 1, mitochondrial from Arabidopsis thaliana (Mouse-ear cress).